Consider the following 405-residue polypeptide: Tryptophan synthase beta chain (405 aa).

Lys95 carries the post-translational modification N6-(pyridoxal phosphate)lysine.

It belongs to the TrpB family. As to quaternary structure, tetramer of two alpha and two beta chains. The cofactor is pyridoxal 5'-phosphate.

It catalyses the reaction (1S,2R)-1-C-(indol-3-yl)glycerol 3-phosphate + L-serine = D-glyceraldehyde 3-phosphate + L-tryptophan + H2O. It participates in amino-acid biosynthesis; L-tryptophan biosynthesis; L-tryptophan from chorismate: step 5/5. Functionally, the beta subunit is responsible for the synthesis of L-tryptophan from indole and L-serine. In Pseudomonas putida (strain GB-1), this protein is Tryptophan synthase beta chain.